Consider the following 678-residue polypeptide: Probable antibacterial peptide polyprotein (678 aa).

Tandem repeats lie at residues 1–67, 68–114, 115–161, 162–208, 209–255, 256–302, 303–349, 350–396, 397–443, 444–490, 491–537, 538–584, 585–631, and 632–678. The 14 X approximate tandem repeats stretch occupies residues 1-678; that stretch reads MRSPRVIHLA…SEGVVLPEVR (678 aa). The O-linked (GalNAc...) threonine glycan is linked to Thr-32. Disordered regions lie at residues 58–97 and 113–678; these read SEAE…DASL and VRER…PEVR. A compositionally biased stretch (basic and acidic residues) spans 64–73; sequence PEVRERRSPV. O-linked (GalNAc...) threonine glycans are attached at residues Thr-83 and Thr-130. Residues 145 to 157 show a composition bias toward low complexity; the sequence is ESELSPLSEAEVL. Positions 158–167 are enriched in basic and acidic residues; sequence PEVRERRSPV. Thr-177 carries an O-linked (GalNAc...) threonine glycan. The span at 188–204 shows a compositional bias: low complexity; the sequence is VASLESELSPLSEAEVL. Residues 205–214 are compositionally biased toward basic and acidic residues; that stretch reads PEVRERRSPV. O-linked (GalNAc...) threonine glycans are attached at residues Thr-224 and Thr-271. A compositionally biased stretch (basic and acidic residues) spans 299–308; the sequence is PEVRERRSPV. Thr-318 carries an O-linked (GalNAc...) threonine glycan. Low complexity predominate over residues 333-345; it reads ESELSPLSEAEVL. Positions 346-355 are enriched in basic and acidic residues; that stretch reads PEVRERRSPV. The O-linked (GalNAc...) threonine glycan is linked to Thr-365. The segment covering 380-392 has biased composition (low complexity); it reads ESELSPLSEAEVL. Over residues 393–402 the composition is skewed to basic and acidic residues; sequence PEVRERRSPV. A glycan (O-linked (GalNAc...) threonine) is linked at Thr-412. The segment covering 427-439 has biased composition (low complexity); it reads ESELSPLSEAEVL. The span at 440–449 shows a compositional bias: basic and acidic residues; sequence PEVRERRSPV. Residue Thr-459 is glycosylated (O-linked (GalNAc...) threonine). A compositionally biased stretch (low complexity) spans 474-486; that stretch reads ESELSPLSEAEVL. Residues 487–496 show a composition bias toward basic and acidic residues; that stretch reads PEVRERRSPV. Thr-506 carries O-linked (GalNAc...) threonine glycosylation. Positions 521–533 are enriched in low complexity; it reads ESELSPSSEAEVL. Positions 534–543 are enriched in basic and acidic residues; the sequence is PEVRERRSPV. Residue Thr-553 is glycosylated (O-linked (GalNAc...) threonine). A compositionally biased stretch (low complexity) spans 568–580; sequence ESELSPLSEAEVL. The span at 581-590 shows a compositional bias: basic and acidic residues; sequence PEVRERRSPV. Thr-600 is a glycosylation site (O-linked (GalNAc...) threonine). Over residues 615–627 the composition is skewed to low complexity; sequence ESELSPLSEAEGL. A glycan (O-linked (GalNAc...) threonine) is linked at Thr-647.

It is found in the secreted. Has antibacterial activity in vitro. The protein is Probable antibacterial peptide polyprotein of Riptortus clavatus (Bean bug).